The chain runs to 325 residues: Aldose 1-epimerase (325 aa).

73 to 74 (NR) serves as a coordination point for substrate. His-177 (proton donor) is an active-site residue. Asp-230 is a substrate binding site. Glu-283 acts as the Proton acceptor in catalysis.

The protein belongs to the aldose epimerase family.

The catalysed reaction is alpha-D-glucose = beta-D-glucose. The protein operates within carbohydrate metabolism; hexose metabolism. The polypeptide is Aldose 1-epimerase (galM) (Bacillus subtilis (strain 168)).